A 956-amino-acid chain; its full sequence is MWATLAKKIFGTANDRRLKGYRPKVAAINALEPEIQKLSDEELAAQTITLRAQLAEGKTLDDLIVPAFATVREAARRVLGQRHFDVQLIGGMVLHEGGIAEMRTGEGKTLVATLATYLNALAGQGVHVVTVNDYLARRDAEWMGQVYRFLGLSTGIIVHGLDDAQRREAYAADITYGTNNEFGFDYLRDNMKYELSHMVQRGHAFAIVDEVDSILIDEARTPLIISGPSDDKSDLYNLVDTLIPKLNDEDFELDEKQRSTNLTEAGNEHIEELLREIGALHDGSLYDAVNVTLVHHVNQALRAHKLFQRDKDYIERNGEIVIIDEFTGRMMPGRRYSEGLHQALEAKEHVQVQPENVTLASITFQNYFRLYKKLAGMTGTAATEADEFAEIYRLEVVSIPTNNPVRRHDEDDEVYRSGEEKLRAITREIEAAGQTLQPMLVGTTSIEKSEQLAAFMLQQGYKQIDFSEPKALQKLYAAARSGKPSKLFAVLNARFHEQEAYIVAEAGVPGAITIATNMAGRGTDIKLGGNVDMRVEQECASLPPGPDRDAKEAEIRAEVDSFRDQAIAAGGLYIIGTERHESRRIDNQLRGRSGRQGDPGRSKFFLSLKDDLMRIFGSDRMESMLLKLGLKEDEAIVHPWINKALEKAQQKVEARNFEMRKNILKYDNVMNDQRKVVFEQRREMMGQDSLEEMIHDMRTGVVDDLVGKFVPHDAYPEAWDIEGLTQGLETALNLALPLADWAKEEGITDEAMHERLQQAAETAYAERAERNGPDLMRYIEKQVVLQVLDHLWREHLVTLDHLRQVIGWRGLAQRDPLNEYKSEAFALFDELITQLRETTTAQLSRVEVAFAPSADQSPFETLAAAAPFDPVPAVPPLAASLALEGPTETGQTAVSFMPQQGVEAFNGRDVLVAAEPTIPTLERNADDPKSWGRVGRNEPCPCGSGKKYKHCHGMIS.

Residues glutamine 87, 105 to 109, and aspartate 524 contribute to the ATP site; that span reads GEGKT. Zn(2+) is bound by residues cysteine 940, cysteine 942, cysteine 951, and histidine 952.

This sequence belongs to the SecA family. In terms of assembly, monomer and homodimer. Part of the essential Sec protein translocation apparatus which comprises SecA, SecYEG and auxiliary proteins SecDF-YajC and YidC. Zn(2+) serves as cofactor.

It is found in the cell inner membrane. The protein localises to the cytoplasm. The catalysed reaction is ATP + H2O + cellular proteinSide 1 = ADP + phosphate + cellular proteinSide 2.. In terms of biological role, part of the Sec protein translocase complex. Interacts with the SecYEG preprotein conducting channel. Has a central role in coupling the hydrolysis of ATP to the transfer of proteins into and across the cell membrane, serving both as a receptor for the preprotein-SecB complex and as an ATP-driven molecular motor driving the stepwise translocation of polypeptide chains across the membrane. This chain is Protein translocase subunit SecA, found in Beijerinckia indica subsp. indica (strain ATCC 9039 / DSM 1715 / NCIMB 8712).